The chain runs to 596 residues: MLEKEDIRSLLKELPSSPGVYRFYSIEKELIYVGKAKSLRKRVANYFTNKKNLDQKTRSMVRKIYHAEYTLVNSEYEALLLENNLIKENKPKYNVLLRDDKTYPFICLSSADFPTLTTTRKIDKKKGEYFGPYTSGRAMHSLVESLRKTFFIRTCDLNLTKQNIDAHKFKVCLEYHIGNCKGPCEGKQEKEDYDVSIIQVRNILKGNFSSVKKYYQEKMLSAAEDMQFEKAQFFKERYNSVLGLEKSSLIVNPDINNLEVYTIVKRLNRASVNFMSILHGSIIKARTIEMKAVLDETEEELLMHALFEIHEEGWDSTKEIICNIELPILSTYCKVSIPQRGDKKKLIDLSLKNAWHTLTRYDDQKKEKPEIRVLKTLQADLSLKELPAHIECFDNSNIQGTNPVAAMVCYKNGKPSKKDYRHFNIKTVEGPNDFASMYEIVYRRYKRMGEEGLPFPTLIIIDGGKGQLSFACQALKDLNIYGQIPIVSIAKNLEELFFPGDNDPLYLDKKSESLKLIQQIRDETHRFAITFHRQKRSKDALLKTEFENLVGIGPGTVKKLLTHFKTVKRIKEASIEQLTPVIGNSKATILFQQLNK.

The region spanning serine 16–valine 95 is the GIY-YIG domain. The UVR domain occupies serine 209–leucine 244.

This sequence belongs to the UvrC family. In terms of assembly, interacts with UvrB in an incision complex.

The protein localises to the cytoplasm. The UvrABC repair system catalyzes the recognition and processing of DNA lesions. UvrC both incises the 5' and 3' sides of the lesion. The N-terminal half is responsible for the 3' incision and the C-terminal half is responsible for the 5' incision. The sequence is that of UvrABC system protein C from Cytophaga hutchinsonii (strain ATCC 33406 / DSM 1761 / CIP 103989 / NBRC 15051 / NCIMB 9469 / D465).